A 137-amino-acid polypeptide reads, in one-letter code: Large ribosomal subunit protein uL16 (137 aa).

A compositionally biased stretch (basic residues) spans 1–13 (MLQPSRRKYRKEQ). Residues 1–22 (MLQPSRRKYRKEQKGRNTGLAT) are disordered.

The protein belongs to the universal ribosomal protein uL16 family. As to quaternary structure, part of the 50S ribosomal subunit.

Functionally, binds 23S rRNA and is also seen to make contacts with the A and possibly P site tRNAs. The chain is Large ribosomal subunit protein uL16 from Azoarcus sp. (strain BH72).